The chain runs to 131 residues: Peptide methionine sulfoxide reductase MsrB (131 aa).

A MsrB domain is found at 9–131 (DEDWKKELTP…NSASLKFQKE (123 aa)). Positions 48, 51, 97, and 100 each coordinate Zn(2+). Catalysis depends on Cys120, which acts as the Nucleophile.

The protein belongs to the MsrB Met sulfoxide reductase family. Requires Zn(2+) as cofactor.

It catalyses the reaction L-methionyl-[protein] + [thioredoxin]-disulfide + H2O = L-methionyl-(R)-S-oxide-[protein] + [thioredoxin]-dithiol. This Leptospira interrogans serogroup Icterohaemorrhagiae serovar Lai (strain 56601) protein is Peptide methionine sulfoxide reductase MsrB.